The sequence spans 1025 residues: Collagen alpha-1(VI) chain (1025 aa).

A signal peptide spans 1–19 (MRLAHALLPLLLQACWVAT). An N-terminal globular domain region spans residues 20–255 (QDIQGSKAIA…CCSFECQAAR (236 aa)). In terms of domain architecture, VWFA 1 spans 36 to 234 (DLFFVLDTSE…EVISQTIDTI (199 aa)). N-linked (GlcNAc...) asparagine glycosylation occurs at N211. The interval 252–588 (QAARGPPGPR…QGPPGHVGPP (337 aa)) is disordered. The interval 256-591 (GPPGPRGDPG…PGHVGPPGPD (336 aa)) is triple-helical region. The Cell attachment site motif lies at 261–263 (RGD). Basic and acidic residues-rich tracts occupy residues 267–284 (EGER…EAGD) and 300–333 (KGEK…DGMK). 2 short sequence motifs (cell attachment site) span residues 441–443 (RGD) and 477–479 (RGD). N515 and N536 each carry an N-linked (GlcNAc...) asparagine glycan. The segment covering 549–559 (GEVGDPGEDNN) has biased composition (acidic residues). Residues 578–588 (PQGPPGHVGPP) show a composition bias toward pro residues. The segment at 592–1025 (ECEILDIIMK…QTVSRKVALG (434 aa)) is C-terminal globular domain. VWFA domains lie at 614-802 (DILF…LKNI) and 826-1018 (DITI…YQTV). Residues N801 and N893 are each glycosylated (N-linked (GlcNAc...) asparagine).

It belongs to the type VI collagen family. Trimers composed of three different chains: alpha-1(VI), alpha-2(VI), and alpha-3(VI) or alpha-4(VI) or alpha-5(VI) or alpha-6(VI). In terms of processing, prolines at the third position of the tripeptide repeating unit (G-X-Y) are hydroxylated in some or all of the chains.

The protein localises to the secreted. The protein resides in the extracellular space. It is found in the extracellular matrix. In terms of biological role, collagen VI acts as a cell-binding protein. This Mus musculus (Mouse) protein is Collagen alpha-1(VI) chain (Col6a1).